The primary structure comprises 992 residues: Sorting nexin-19 (992 aa).

The PXA domain maps to 95–272; that stretch reads ERQLEREINR…VLVGIFSKAR (178 aa). The tract at residues 410–442 is disordered; sequence ALEPKDGEASEGAEAEEGPGTETETGLPVSTLN. Residues 418-428 show a composition bias toward acidic residues; sequence ASEGAEAEEGP. The 131-residue stretch at 533-663 folds into the PX domain; that stretch reads LRITGTITAR…EFLALNTDAR (131 aa). A 1,2-diacyl-sn-glycero-3-phospho-(1D-myo-inositol-3-phosphate)-binding residues include Arg-582 and Arg-629. 3 disordered regions span residues 692-726, 778-797, and 973-992; these read FPRSEPQSPTEELSEAETESKPQTEGKKASKSRLR, QPTKAPEKDPEQPPKGRVDS, and AATTSASDTPGNSKRMGVSS. Composition is skewed to basic and acidic residues over residues 709–719 and 782–795; these read TESKPQTEGKK and APEKDPEQPPKGRV. Residues 980-992 show a composition bias toward polar residues; sequence DTPGNSKRMGVSS.

The protein belongs to the sorting nexin family. As to quaternary structure, interacts with PTPRN.

Its subcellular location is the early endosome membrane. It is found in the cytoplasmic vesicle membrane. Functionally, plays a role in intracellular vesicle trafficking and exocytosis. May play a role in maintaining insulin-containing dense core vesicles in pancreatic beta-cells and in preventing their degradation. May play a role in insulin secretion. Interacts with membranes containing phosphatidylinositol 3-phosphate (PtdIns(3P)). The protein is Sorting nexin-19 (SNX19) of Homo sapiens (Human).